A 907-amino-acid polypeptide reads, in one-letter code: Nuclear receptor coactivator 7 (907 aa).

Residues methionine 1–glutamine 12 are compositionally biased toward basic and acidic residues. Residues methionine 1–glutamate 29 are a coiled coil. Disordered regions lie at residues methionine 1 to serine 51, aspartate 63 to lysine 83, and tyrosine 99 to proline 121. Polar residues predominate over residues lysine 25–serine 41. Composition is skewed to basic and acidic residues over residues alanine 68–glutamate 78 and tyrosine 99–methionine 116. The LysM domain maps to isoleucine 125–valine 168. Disordered regions lie at residues leucine 335 to glutamate 373 and aspartate 401 to glycine 443. Over residues aspartate 401 to serine 422 the composition is skewed to basic and acidic residues. Residues alanine 746–glutamate 907 enclose the TLDc domain.

This sequence belongs to the OXR1 family.

The protein resides in the nucleus. Its function is as follows. Enhances the transcriptional activities of several nuclear receptors. The protein is Nuclear receptor coactivator 7 (NCOA7) of Gallus gallus (Chicken).